We begin with the raw amino-acid sequence, 519 residues long: Dolichol kinase (519 aa).

Over M1–D47 the chain is Cytoplasmic. Residues F48 to C68 form a helical membrane-spanning segment. At V69–F88 the chain is on the lumenal side. A helical membrane pass occupies residues V89–H109. Topologically, residues G110–D118 are cytoplasmic. Residues T119–V139 traverse the membrane as a helical segment. At I140–S151 the chain is on the lumenal side. Residues Y152–F172 traverse the membrane as a helical segment. Residues E173–I181 lie on the Cytoplasmic side of the membrane. Residues I182–L203 form a helical membrane-spanning segment. Residues D204–E223 lie on the Lumenal side of the membrane. A helical membrane pass occupies residues A224–S244. At I245 to M253 the chain is on the cytoplasmic side. Residues H254–T274 traverse the membrane as a helical segment. At F275–E294 the chain is on the lumenal side. Residues S295 to S315 traverse the membrane as a helical segment. The Cytoplasmic segment spans residues I316–N326. The chain crosses the membrane as a helical span at residues T327–D347. Topologically, residues S348–N349 are lumenal. The helical transmembrane segment at F350–F370 threads the bilayer. The Cytoplasmic segment spans residues Q371–S394. A helical membrane pass occupies residues G395–N415. The Lumenal segment spans residues N416–S417. Residues P418–Y438 traverse the membrane as a helical segment. The Cytoplasmic portion of the chain corresponds to G439–T449. Residues L450–F470 form a helical membrane-spanning segment. Over D471–K472 the chain is Lumenal. The helical transmembrane segment at A473–V493 threads the bilayer. Topologically, residues L494–L519 are cytoplasmic.

The protein belongs to the polyprenol kinase family.

It is found in the endoplasmic reticulum membrane. The catalysed reaction is a di-trans,poly-cis-dolichol + CTP = a di-trans,poly-cis-dolichyl phosphate + CDP + H(+). It functions in the pathway protein modification; protein glycosylation. Its function is as follows. Catalyzes CTP-mediated phosphorylation of dolichol, the terminal step in de novo dolichyl monophosphate (Dol-P) biosynthesis. Dol-P is a lipid carrier essential for the synthesis of N-linked and O-linked oligosaccharides and for GPI anchors. The sequence is that of Dolichol kinase (SEC59) from Saccharomyces cerevisiae (strain ATCC 204508 / S288c) (Baker's yeast).